A 146-amino-acid chain; its full sequence is Hemoglobin subunit beta (146 aa).

The Globin domain maps to 2-146 (QWSDSERTII…VVMFLGKQYH (145 aa)). 2 residues coordinate heme b: His63 and His92.

It belongs to the globin family. In terms of assembly, heterotetramer of two alpha chains and two beta chains. In terms of tissue distribution, red blood cells.

Involved in oxygen transport from the lung to the various peripheral tissues. This chain is Hemoglobin subunit beta (hbb), found in Artedidraco orianae (Barbeled plunderfish).